A 281-amino-acid chain; its full sequence is Probable endonuclease 4 (281 aa).

Residues H69, H109, E145, D179, H182, H216, D229, H231, and E261 each coordinate Zn(2+).

It belongs to the AP endonuclease 2 family. Requires Zn(2+) as cofactor.

It catalyses the reaction Endonucleolytic cleavage to 5'-phosphooligonucleotide end-products.. Its function is as follows. Endonuclease IV plays a role in DNA repair. It cleaves phosphodiester bonds at apurinic or apyrimidinic (AP) sites, generating a 3'-hydroxyl group and a 5'-terminal sugar phosphate. This chain is Probable endonuclease 4, found in Pectobacterium atrosepticum (strain SCRI 1043 / ATCC BAA-672) (Erwinia carotovora subsp. atroseptica).